Reading from the N-terminus, the 117-residue chain is Large ribosomal subunit protein uL18 (117 aa).

This sequence belongs to the universal ribosomal protein uL18 family. As to quaternary structure, part of the 50S ribosomal subunit; part of the 5S rRNA/L5/L18/L25 subcomplex. Contacts the 5S and 23S rRNAs.

Functionally, this is one of the proteins that bind and probably mediate the attachment of the 5S RNA into the large ribosomal subunit, where it forms part of the central protuberance. This chain is Large ribosomal subunit protein uL18, found in Hydrogenovibrio crunogenus (strain DSM 25203 / XCL-2) (Thiomicrospira crunogena).